The chain runs to 392 residues: Integrin-linked kinase-associated serine/threonine phosphatase 2C (392 aa).

Position 1 is an N-acetylmethionine (M1). Positions 1-91 are disordered; the sequence is MDLFGDLPEP…PEEEKNGGEE (91 aa). Residues 56–70 are compositionally biased toward polar residues; the sequence is SGNSGSLATSGSQVV. The segment covering 72 to 91 has biased composition (basic and acidic residues); the sequence is TEGKGAKRKAPEEEKNGGEE. One can recognise a PPM-type phosphatase domain in the interval 108 to 390; it reads KGYVAERKGE…DNVTVMVVRI (283 aa). Positions 152 and 153 each coordinate Mn(2+). K210 is modified (N6-acetyllysine). Mn(2+)-binding residues include D326 and D381.

It belongs to the PP2C family. In terms of assembly, interacts with ILK. Requires Mg(2+) as cofactor. The cofactor is Mn(2+).

It is found in the cytoplasm. It catalyses the reaction O-phospho-L-seryl-[protein] + H2O = L-seryl-[protein] + phosphate. It carries out the reaction O-phospho-L-threonyl-[protein] + H2O = L-threonyl-[protein] + phosphate. Protein phosphatase that may play a role in regulation of cell cycle progression via dephosphorylation of its substrates whose appropriate phosphorylation states might be crucial for cell proliferation. Selectively associates with integrin linked kinase (ILK), to modulate cell adhesion and growth factor signaling. Inhibits the ILK-GSK3B signaling axis and may play an important role in inhibiting oncogenic transformation. This is Integrin-linked kinase-associated serine/threonine phosphatase 2C (Ilkap) from Mus musculus (Mouse).